The following is a 28-amino-acid chain: Dermaseptin-DI2 (28 aa).

As to expression, expressed by the skin glands.

Its subcellular location is the secreted. Has antibacterial activity against the Gram-positive bacteria S.aureus and E.faecalis, and the Gram-negative bacteria P.aeruginosa and E.coli. Has antiprotozoal activity against T.cruzi. Has antifungal activity against the yeasts C.tropicalis (MIC=10.9 uM), C.guilliermondii (MIC=21.8 uM), C.albicans (MIC=21.8 uM) and C.albicans ATCC 1023 (MIC=10.9 uM). Decreases viability of murine peritoneal cells. Fuses to, and disrupts liposomes. The sequence is that of Dermaseptin-DI2 from Phyllomedusa distincta (Monkey frog).